The following is a 492-amino-acid chain: Lysine--tRNA ligase (492 aa).

Asp-395 and Glu-402 together coordinate Mg(2+).

This sequence belongs to the class-II aminoacyl-tRNA synthetase family. As to quaternary structure, homodimer. Mg(2+) is required as a cofactor.

It localises to the cytoplasm. The catalysed reaction is tRNA(Lys) + L-lysine + ATP = L-lysyl-tRNA(Lys) + AMP + diphosphate. This chain is Lysine--tRNA ligase, found in Thermus thermophilus (strain ATCC BAA-163 / DSM 7039 / HB27).